The sequence spans 153 residues: NAD(P)H-quinone oxidoreductase subunit N (153 aa).

It belongs to the complex I NdhN subunit family. NDH-1 can be composed of about 15 different subunits; different subcomplexes with different compositions have been identified which probably have different functions.

Its subcellular location is the cellular thylakoid membrane. It catalyses the reaction a plastoquinone + NADH + (n+1) H(+)(in) = a plastoquinol + NAD(+) + n H(+)(out). The catalysed reaction is a plastoquinone + NADPH + (n+1) H(+)(in) = a plastoquinol + NADP(+) + n H(+)(out). In terms of biological role, NDH-1 shuttles electrons from an unknown electron donor, via FMN and iron-sulfur (Fe-S) centers, to quinones in the respiratory and/or the photosynthetic chain. The immediate electron acceptor for the enzyme in this species is believed to be plastoquinone. Couples the redox reaction to proton translocation, and thus conserves the redox energy in a proton gradient. Cyanobacterial NDH-1 also plays a role in inorganic carbon-concentration. This Synechococcus sp. (strain RCC307) protein is NAD(P)H-quinone oxidoreductase subunit N.